The chain runs to 775 residues: Isopimaradiene synthase (775 aa).

Residues 1–36 (MFSSSLKLKTNPLMDNKIHRSSSDRDFRGSTISSVK) constitute a chloroplast transit peptide. Residues aspartate 525, aspartate 529, asparagine 669, glutamine 672, and glutamate 677 each coordinate Mg(2+). The short motif at 525–529 (DDFFD) is the DDXXD motif element.

It belongs to the terpene synthase family. It depends on Mg(2+) as a cofactor. In terms of tissue distribution, ubiquitous expression in roots, stems, leaves and flowers.

It localises to the plastid. The protein resides in the chloroplast. The catalysed reaction is (+)-copalyl diphosphate = isopimara-8(14),15-diene + diphosphate. The protein operates within secondary metabolite biosynthesis; terpenoid biosynthesis. Involved in the biosynthesis of ent-kaurene diterpenoids natural products such as oridonin, miltiradiene, eriocalyxin B and nezukol, known to exhibit antitumor, anti-inflammatory and antibacterial activities. Catalyzes the conversion of (+)-copalyl diphosphate ((+)-CPP) to isopimaradiene. This is Isopimaradiene synthase from Isodon rubescens (Rabdosia rubescens).